Consider the following 341-residue polypeptide: Trimethylamine N-oxide transport system ATP-binding protein TmoW (341 aa).

An ABC transporter domain is found at 6–265 (IKCESVYKIF…PATEYVRKFT (260 aa)). 61 to 68 (GLSGSGKS) is an ATP binding site.

Belongs to the ABC transporter superfamily. In terms of assembly, the complex is probably composed of two ATP-binding proteins (TmoW), two transmembrane proteins (TmoV) and a solute-binding protein (TmoX).

The protein resides in the cell inner membrane. It carries out the reaction a quaternary ammonium(out) + ATP + H2O = a quaternary ammonium(in) + ADP + phosphate + H(+). Part of the ABC transporter complex TmoXWV involved in trimethylamine N-oxide (TMAO) import. Responsible for energy coupling to the transport system. The protein is Trimethylamine N-oxide transport system ATP-binding protein TmoW of Pelagibacter ubique (strain HTCC1062).